Consider the following 187-residue polypeptide: Small ribosomal subunit protein uS4 (187 aa).

An S4 RNA-binding domain is found at 105–174 (RRLQTLVFRK…DNHPERAKIV (70 aa)).

This sequence belongs to the universal ribosomal protein uS4 family. In terms of assembly, part of the 30S ribosomal subunit. Contacts protein S5. The interaction surface between S4 and S5 is involved in control of translational fidelity.

In terms of biological role, one of the primary rRNA binding proteins, it binds directly to 16S rRNA where it nucleates assembly of the body of the 30S subunit. Its function is as follows. With S5 and S12 plays an important role in translational accuracy. This chain is Small ribosomal subunit protein uS4, found in Methanocaldococcus jannaschii (strain ATCC 43067 / DSM 2661 / JAL-1 / JCM 10045 / NBRC 100440) (Methanococcus jannaschii).